Reading from the N-terminus, the 630-residue chain is FAST kinase domain-containing protein 4 (630 aa).

The 59-residue stretch at 560–618 folds into the RAP domain; that stretch reads IAFLRWEFPNFNSRSKDLLGRFVLARRHVLAAGFLVVDVPYYEWLDLKSEWQKSAYLKD.

Belongs to the FAST kinase family. In terms of tissue distribution, expression detected in spleen, testis, colon, heart, smooth muscle, kidney, brain, lung, liver, brown and white adipose tissue with highest expression in testis, heart, smooth muscle and brown adipose tissue.

It localises to the mitochondrion matrix. In terms of biological role, plays a role in processing of mitochondrial RNA precursors and in stabilization of a subset of mature mitochondrial RNA species, such as MT-CO1, MT-CO2, MT-CYB, MT-CO3, MT-ND3, MT-ND5 and MT-ATP8/6. May play a role in cell cycle progression. This chain is FAST kinase domain-containing protein 4 (Tbrg4), found in Mus musculus (Mouse).